The following is a 185-amino-acid chain: Large ribosomal subunit protein uL5 (185 aa).

Belongs to the universal ribosomal protein uL5 family. As to quaternary structure, part of the 50S ribosomal subunit; part of the 5S rRNA/L5/L18/L25 subcomplex. Contacts the 5S rRNA and the P site tRNA. Forms a bridge to the 30S subunit in the 70S ribosome.

Its function is as follows. This is one of the proteins that bind and probably mediate the attachment of the 5S RNA into the large ribosomal subunit, where it forms part of the central protuberance. In the 70S ribosome it contacts protein S13 of the 30S subunit (bridge B1b), connecting the 2 subunits; this bridge is implicated in subunit movement. Contacts the P site tRNA; the 5S rRNA and some of its associated proteins might help stabilize positioning of ribosome-bound tRNAs. This is Large ribosomal subunit protein uL5 from Rhodopseudomonas palustris (strain HaA2).